The chain runs to 246 residues: Pyridoxine 5'-phosphate synthase (246 aa).

Position 12 (asparagine 12) interacts with 3-amino-2-oxopropyl phosphate. 1-deoxy-D-xylulose 5-phosphate is bound at residue 14–15; that stretch reads DH. Arginine 23 contacts 3-amino-2-oxopropyl phosphate. Histidine 48 (proton acceptor) is an active-site residue. The 1-deoxy-D-xylulose 5-phosphate site is built by arginine 50 and histidine 55. Glutamate 75 functions as the Proton acceptor in the catalytic mechanism. Threonine 105 contacts 1-deoxy-D-xylulose 5-phosphate. The active-site Proton donor is histidine 196. 3-amino-2-oxopropyl phosphate-binding positions include glycine 197 and 218 to 219; that span reads GH.

This sequence belongs to the PNP synthase family. Homooctamer; tetramer of dimers.

The protein localises to the cytoplasm. It carries out the reaction 3-amino-2-oxopropyl phosphate + 1-deoxy-D-xylulose 5-phosphate = pyridoxine 5'-phosphate + phosphate + 2 H2O + H(+). Its pathway is cofactor biosynthesis; pyridoxine 5'-phosphate biosynthesis; pyridoxine 5'-phosphate from D-erythrose 4-phosphate: step 5/5. In terms of biological role, catalyzes the complicated ring closure reaction between the two acyclic compounds 1-deoxy-D-xylulose-5-phosphate (DXP) and 3-amino-2-oxopropyl phosphate (1-amino-acetone-3-phosphate or AAP) to form pyridoxine 5'-phosphate (PNP) and inorganic phosphate. This chain is Pyridoxine 5'-phosphate synthase, found in Pseudomonas putida (strain ATCC 47054 / DSM 6125 / CFBP 8728 / NCIMB 11950 / KT2440).